The primary structure comprises 68 residues: MKTQIVILIVAVLVLQLVSQSDAFLQGIIDTVGKWLGKRGLKNLDQYNDLFDGEISDADIKFLQDLMR.

The signal sequence occupies residues 1-23 (MKTQIVILIVAVLVLQLVSQSDA). Leu-36 is modified (leucine amide). Positions 37-68 (GKRGLKNLDQYNDLFDGEISDADIKFLQDLMR) are excised as a propeptide.

The protein belongs to the non-disulfide-bridged peptide (NDBP) superfamily. Short antimicrobial peptide (group 4) family. As to expression, expressed by the venom gland.

It is found in the secreted. It localises to the target cell membrane. Functionally, antimicrobial peptide with weak activity against all bacteria tested (MIC&gt;100 uM) and all yeasts tested (MIC&gt;200 uM). Also provokes weak hemolysis on human erythrocytes (HC(50)=83.7 uM). The polypeptide is Antimicrobial peptide VpCT3 (Mesomexovis punctatus (Scorpion)).